Reading from the N-terminus, the 494-residue chain is Pre-hexon-linking protein IIIa (494 aa).

The tract at residues 1 to 101 (MAALSPTVRA…ALLQRVGRYN (101 aa)) is peripentonal hexon-tethering domain. Residues 132 to 245 (GSLVALNGFL…FTDSRTVNGD (114 aa)) are binding to hexon-linking protein. The residue at position 268 (T268) is a Phosphothreonine; by host. Phosphoserine; by host occurs at positions 439 and 456. A propeptide spanning residues 484–494 (TNPFKHLQPQF) is cleaved from the precursor.

This sequence belongs to the adenoviridae hexon-linking protein IIIa family. In terms of assembly, interacts with hexon proteins; this interaction tethers the peripentonal hexons to hexons situated in the facet. Interacts with the penton protein (via N-terminus). Interacts with packaging protein 3; this interaction is required to promote correct genome packaging. Post-translationally, cleaved near the C-terminus by the viral protease during virion maturation to form the mature protein.

The protein localises to the virion. It is found in the host nucleus. Functionally, structural component of the virion that acts as a cement protein on the capsid exterior which mediates the interactions between the hexons, including the peripentonal hexons, and reaches all the way to the penton vertices. Two hexon linking proteins IIIa, one from each facet, stabilize the unique edge interface between a pair of facets. As the virus enters the host cell, hexon linking proteins IIIa are shed concomitant with virion acidification in the endosome. During virus assembly, seems to play a role in the serotype specificity of the packaging of viral DNA via its interaction with packaging protein 3. In Murine adenovirus A serotype 1 (MAdV-1), this protein is Pre-hexon-linking protein IIIa.